A 137-amino-acid polypeptide reads, in one-letter code: Proofreading thioesterase EntH (137 aa).

Glutamate 63 functions as the Nucleophile or proton acceptor in the catalytic mechanism.

It belongs to the thioesterase PaaI family. As to quaternary structure, homotetramer. Dimer of dimers. Interacts specifically with the aryl carrier protein (ArCP) domain of EntB.

It is found in the cytoplasm. The protein operates within siderophore biosynthesis; enterobactin biosynthesis. Functionally, required for optimal enterobactin synthesis. Acts as a proofreading enzyme that prevents EntB misacylation by hydrolyzing the thioester bound existing between EntB and wrongly charged molecules. This chain is Proofreading thioesterase EntH, found in Enterobacter lignolyticus (strain SCF1).